A 457-amino-acid polypeptide reads, in one-letter code: DDB1- and CUL4-associated factor 10 (457 aa).

4 WD repeats span residues 65 to 104 (RTHGAVFNLEYSPDGSVLTVACEQTEVLLFDPVSSKHIKT), 108 to 146 (AHEDCVNNIRFLDNRMFATCSDDTTIALWDLRKLNSKVC), 150 to 189 (GHTSWVKNIEYDTNTRLLVTSGFDGNVIIWDTNRCTEDGC), and 195 to 234 (FHTRFLMRMRLTPDCSKMLISTSSGYLLILHELDLTKSLE). Residues 246-265 (TASTSDMTSTSSDTRPSSSP) show a composition bias toward low complexity. Positions 246–304 (TASTSDMTSTSSDTRPSSSPCHNSDLGPLFEKHMSRSSQREGASPRNSLEVLTPEVPGE) are disordered. A compositionally biased stretch (polar residues) spans 281–292 (RSSQREGASPRN). WD repeat units follow at residues 306-346 (DRGN…QEGA), 368-406 (VGRGYIKELCFSPDGRMIASPYAYGIRLLGFDSQCKELV), and 424-457 (SHKDVVLTTKFSPTHCQIASGCLSGRVTLYQPKF).

This sequence belongs to the WD repeat DCAF10 family.

The protein operates within protein modification; protein ubiquitination. Functionally, may function as a substrate receptor for CUL4-DDB1 E3 ubiquitin-protein ligase complex. This chain is DDB1- and CUL4-associated factor 10 (dcaf10), found in Xenopus tropicalis (Western clawed frog).